The chain runs to 126 residues: Holo-[acyl-carrier-protein] synthase (126 aa).

Residues Asp-9 and Glu-59 each contribute to the Mg(2+) site.

This sequence belongs to the P-Pant transferase superfamily. AcpS family. Mg(2+) serves as cofactor.

The protein resides in the cytoplasm. It carries out the reaction apo-[ACP] + CoA = holo-[ACP] + adenosine 3',5'-bisphosphate + H(+). In terms of biological role, transfers the 4'-phosphopantetheine moiety from coenzyme A to a Ser of acyl-carrier-protein. In Myxococcus xanthus (strain DK1622), this protein is Holo-[acyl-carrier-protein] synthase.